The primary structure comprises 215 residues: Beta-crystallin A3 (215 aa).

The interval 1–30 (MGEAAVPPELDTFPAAKMAQTNPLPVPMGP) is N-terminal arm. 2 Beta/gamma crystallin 'Greek key' domains span residues 31-70 (WKIT…KVEC) and 71-117 (GAWV…RPVC). Positions 118-123 (SANHKE) are connecting peptide. Beta/gamma crystallin 'Greek key' domains lie at 124-165 (SKIT…KIPC) and 166-214 (GAWV…RRIQ).

Belongs to the beta/gamma-crystallin family. Homo/heterodimer, or complexes of higher-order. The structure of beta-crystallin oligomers seems to be stabilized through interactions between the N-terminal arms.

Crystallins are the dominant structural components of the vertebrate eye lens. The chain is Beta-crystallin A3 (CRYBA1) from Gallus gallus (Chicken).